Reading from the N-terminus, the 480-residue chain is Proline--tRNA ligase (480 aa).

This sequence belongs to the class-II aminoacyl-tRNA synthetase family. ProS type 3 subfamily. In terms of assembly, homodimer.

The protein localises to the cytoplasm. The catalysed reaction is tRNA(Pro) + L-proline + ATP = L-prolyl-tRNA(Pro) + AMP + diphosphate. Catalyzes the attachment of proline to tRNA(Pro) in a two-step reaction: proline is first activated by ATP to form Pro-AMP and then transferred to the acceptor end of tRNA(Pro). The protein is Proline--tRNA ligase of Pyrococcus horikoshii (strain ATCC 700860 / DSM 12428 / JCM 9974 / NBRC 100139 / OT-3).